Reading from the N-terminus, the 532-residue chain is Flavin-containing monooxygenase 1 (532 aa).

Residues 1–510 are Lumenal-facing; sequence MVKRVAIVGA…TRTVQETPST (510 aa). FAD-binding positions include 9 to 13, Glu32, 40 to 41, and 61 to 62; these read GAGVS, LW, and NS. NADP(+) contacts are provided by residues 60-61 and 195-198; these read SN and SGTD. The chain crosses the membrane as a helical span at residues 511–531; sequence FETLLKLFSFLALLVAVFFIF. Leu532 is a topological domain (cytoplasmic).

The protein belongs to the FMO family. FAD is required as a cofactor. Expressed in liver, lung and kidney and to a lesser extent in the heart and brain.

The protein resides in the endoplasmic reticulum membrane. The enzyme catalyses hypotaurine + NADPH + O2 + H(+) = taurine + NADP(+) + H2O. It carries out the reaction hypotaurine + NADH + O2 + H(+) = taurine + NAD(+) + H2O. It catalyses the reaction trimethylamine + NADPH + O2 = trimethylamine N-oxide + NADP(+) + H2O. The catalysed reaction is N,N-dimethylaniline + NADPH + O2 + H(+) = N,N-dimethylaniline N-oxide + NADP(+) + H2O. In terms of biological role, broad spectrum monooxygenase that catalyzes the oxygenation of a wide variety of nitrogen- and sulfur-containing compounds including xenobiotics. Catalyzes the S-oxygenation of hypotaurine to produce taurine, an organic osmolyte involved in cell volume regulation as well as a variety of cytoprotective and developmental processes. In vitro, catalyzes the N-oxygenation of trimethylamine (TMA) to produce trimethylamine N-oxide (TMAO) and could therefore participate to the detoxification of this compound that is generated by the action of gut microbiota from dietary precursors such as choline, choline containing compounds, betaine or L-carnitine. This is Flavin-containing monooxygenase 1 from Rattus norvegicus (Rat).